Reading from the N-terminus, the 431-residue chain is Enolase (431 aa).

(2R)-2-phosphoglycerate is bound at residue Gln-167. Catalysis depends on Glu-209, which acts as the Proton donor. 3 residues coordinate Mg(2+): Asp-246, Glu-289, and Asp-316. Lys-341, Arg-370, Ser-371, and Lys-392 together coordinate (2R)-2-phosphoglycerate. Lys-341 (proton acceptor) is an active-site residue.

Belongs to the enolase family. In terms of assembly, component of the RNA degradosome, a multiprotein complex involved in RNA processing and mRNA degradation. It depends on Mg(2+) as a cofactor.

Its subcellular location is the cytoplasm. It localises to the secreted. It is found in the cell surface. The enzyme catalyses (2R)-2-phosphoglycerate = phosphoenolpyruvate + H2O. Its pathway is carbohydrate degradation; glycolysis; pyruvate from D-glyceraldehyde 3-phosphate: step 4/5. Functionally, catalyzes the reversible conversion of 2-phosphoglycerate (2-PG) into phosphoenolpyruvate (PEP). It is essential for the degradation of carbohydrates via glycolysis. The protein is Enolase of Marinobacter nauticus (strain ATCC 700491 / DSM 11845 / VT8) (Marinobacter aquaeolei).